The following is a 137-amino-acid chain: Peptide methionine sulfoxide reductase MsrB (137 aa).

Residues 9–131 (DAEWRAMLDD…NSASLRFDAT (123 aa)) enclose the MsrB domain. Residues Cys-48, Cys-51, Cys-97, and Cys-100 each contribute to the Zn(2+) site. Cys-120 functions as the Nucleophile in the catalytic mechanism.

This sequence belongs to the MsrB Met sulfoxide reductase family. The cofactor is Zn(2+).

The catalysed reaction is L-methionyl-[protein] + [thioredoxin]-disulfide + H2O = L-methionyl-(R)-S-oxide-[protein] + [thioredoxin]-dithiol. The chain is Peptide methionine sulfoxide reductase MsrB from Herminiimonas arsenicoxydans.